The primary structure comprises 201 residues: tRNA (guanine-N(7)-)-methyltransferase (201 aa).

The S-adenosyl-L-methionine site is built by E33, E58, D85, and D106. D106 is an active-site residue. Substrate is bound by residues K110, D142, and 180–183 (TTYE).

It belongs to the class I-like SAM-binding methyltransferase superfamily. TrmB family.

It catalyses the reaction guanosine(46) in tRNA + S-adenosyl-L-methionine = N(7)-methylguanosine(46) in tRNA + S-adenosyl-L-homocysteine. It participates in tRNA modification; N(7)-methylguanine-tRNA biosynthesis. In terms of biological role, catalyzes the formation of N(7)-methylguanine at position 46 (m7G46) in tRNA. This is tRNA (guanine-N(7)-)-methyltransferase from Mesomycoplasma hyopneumoniae (strain J / ATCC 25934 / NCTC 10110) (Mycoplasma hyopneumoniae).